Here is a 167-residue protein sequence, read N- to C-terminus: MALLNILHYPDERLHTVAKPVEVFDAALQQQIDDMFETMYEAKGIGLAATQVDYHRRLVVMDISEERDERRVFINPEIVEKDGETVYEEGCLSVPGIYDKVTRAERVKVKAQDRDGKPFELEADGLLAICIQHELDHLNGVVFVERLSQMKQQRIKTKLKKREKQNM.

C91 and H133 together coordinate Fe cation. E134 is a catalytic residue. H137 is a binding site for Fe cation.

Belongs to the polypeptide deformylase family. The cofactor is Fe(2+).

It catalyses the reaction N-terminal N-formyl-L-methionyl-[peptide] + H2O = N-terminal L-methionyl-[peptide] + formate. Its function is as follows. Removes the formyl group from the N-terminal Met of newly synthesized proteins. Requires at least a dipeptide for an efficient rate of reaction. N-terminal L-methionine is a prerequisite for activity but the enzyme has broad specificity at other positions. The chain is Peptide deformylase from Chromobacterium violaceum (strain ATCC 12472 / DSM 30191 / JCM 1249 / CCUG 213 / NBRC 12614 / NCIMB 9131 / NCTC 9757 / MK).